We begin with the raw amino-acid sequence, 274 residues long: Dermonecrotic toxin SdSicTox-betaIIB2i (274 aa).

The active site involves H5. Positions 25 and 27 each coordinate Mg(2+). H41 functions as the Nucleophile in the catalytic mechanism. Disulfide bonds link C45-C51 and C47-C190. D85 serves as a coordination point for Mg(2+).

Belongs to the arthropod phospholipase D family. Class II subfamily. Mg(2+) serves as cofactor. As to expression, expressed by the venom gland.

The protein localises to the secreted. The enzyme catalyses an N-(acyl)-sphingosylphosphocholine = an N-(acyl)-sphingosyl-1,3-cyclic phosphate + choline. It carries out the reaction an N-(acyl)-sphingosylphosphoethanolamine = an N-(acyl)-sphingosyl-1,3-cyclic phosphate + ethanolamine. It catalyses the reaction a 1-acyl-sn-glycero-3-phosphocholine = a 1-acyl-sn-glycero-2,3-cyclic phosphate + choline. The catalysed reaction is a 1-acyl-sn-glycero-3-phosphoethanolamine = a 1-acyl-sn-glycero-2,3-cyclic phosphate + ethanolamine. Its function is as follows. Dermonecrotic toxins cleave the phosphodiester linkage between the phosphate and headgroup of certain phospholipids (sphingolipid and lysolipid substrates), forming an alcohol (often choline) and a cyclic phosphate. This toxin acts on sphingomyelin (SM). It may also act on ceramide phosphoethanolamine (CPE), lysophosphatidylcholine (LPC) and lysophosphatidylethanolamine (LPE), but not on lysophosphatidylserine (LPS), and lysophosphatidylglycerol (LPG). It acts by transphosphatidylation, releasing exclusively cyclic phosphate products as second products. Induces dermonecrosis, hemolysis, increased vascular permeability, edema, inflammatory response, and platelet aggregation. The chain is Dermonecrotic toxin SdSicTox-betaIIB2i from Sicarius cf. damarensis (strain GJB-2008) (Six-eyed sand spider).